The sequence spans 553 residues: NADH-quinone oxidoreductase subunit M (553 aa).

The next 3 helical transmembrane spans lie at 4-24 (VPWL…IILL), 34-54 (WAGM…AAEF), and 84-104 (IAVV…VAGW). Residues 113 to 135 (LSPASGRYPQRPAPPRLRSSGGE) form a disordered region. 10 consecutive transmembrane segments (helical) span residues 140-160 (VHAY…SVIA), 164-184 (LLFY…IGGF), 197-217 (FLLY…GLYV), 246-266 (AVFK…APLW), 316-336 (PLIV…AIGQ), 342-362 (LIAY…FVMT), 371-391 (LYML…GFLI), 420-440 (AMAT…LVLL), 447-467 (WLAA…MLWL), and 492-512 (IVVA…KPVL). Residues 527–553 (GQHDPAPSVAHPVPAVGASRTAEGPHP) are disordered. Low complexity predominate over residues 531–544 (PAPSVAHPVPAVGA).

It belongs to the complex I subunit 4 family.

The protein resides in the cell membrane. The catalysed reaction is a quinone + NADH + 5 H(+)(in) = a quinol + NAD(+) + 4 H(+)(out). NDH-1 shuttles electrons from NADH, via FMN and iron-sulfur (Fe-S) centers, to quinones in the respiratory chain. The immediate electron acceptor for the enzyme in this species is believed to be menaquinone. Couples the redox reaction to proton translocation (for every two electrons transferred, four hydrogen ions are translocated across the cytoplasmic membrane), and thus conserves the redox energy in a proton gradient. This chain is NADH-quinone oxidoreductase subunit M (nuoM), found in Mycobacterium tuberculosis (strain CDC 1551 / Oshkosh).